The primary structure comprises 311 residues: tRNA pseudouridine synthase B (311 aa).

The Nucleophile role is filled by aspartate 49.

Belongs to the pseudouridine synthase TruB family. Type 1 subfamily.

It catalyses the reaction uridine(55) in tRNA = pseudouridine(55) in tRNA. Responsible for synthesis of pseudouridine from uracil-55 in the psi GC loop of transfer RNAs. The chain is tRNA pseudouridine synthase B from Rhizobium meliloti (strain 1021) (Ensifer meliloti).